The chain runs to 402 residues: Nodulation protein E (402 aa).

Positions 2–401 constitute a Ketosynthase family 3 (KS3) domain; sequence DRRVVITGMG…GTNAVLAFKQ (400 aa). Residues C162, H294, and H331 each act as for beta-ketoacyl synthase activity in the active site. The chain crosses the membrane as a helical span at residues 329-348; the sequence is HAHCIGAASALEMIACVMAI.

This sequence belongs to the thiolase-like superfamily. Beta-ketoacyl-ACP synthases family.

It is found in the cell inner membrane. Functionally, proposed to synthesize NOD factor fatty acyl chain. Involved in the synthesis of a highly unsaturated fatty acid moiety, which forms part of a lipo-oligosaccharide that is responsible for host specificity. The polypeptide is Nodulation protein E (nodE) (Rhizobium meliloti (strain 1021) (Ensifer meliloti)).